The chain runs to 487 residues: uncharacterized protein (487 aa).

This is an uncharacterized protein from Bacillus subtilis (strain 168).